A 352-amino-acid polypeptide reads, in one-letter code: Zinc transporter 1 (352 aa).

A signal peptide spans 1-29 (MARTMTMRVSSLLVAVVLLAALSFQACSG). Over 30 to 56 (HGGINDGDGQVDAPATPASSSGVRSKG) the chain is Extracellular. The helical transmembrane segment at 57–77 (LIAVKVWCLVILLVFTFAGGV) threads the bilayer. Residues 78–87 (SPYFYRWNES) lie on the Cytoplasmic side of the membrane. Residues 88–108 (FLLLGTQFAAGVFLGTALMHF) form a helical membrane-spanning segment. Residues 109 to 127 (LADSTSTFKGLTTNQYPFS) lie on the Extracellular side of the membrane. The helical transmembrane segment at 128–148 (FMLTCVGFLLTMLSDLVIAAV) threads the bilayer. Over 149–200 (ARRSAAAGVSDNQVSEQQQRQQAEGAVMSRKEEEAAAVAHPAMLVRTSSFED) the chain is Cytoplasmic. A helical membrane pass occupies residues 201–221 (AVLLIVALCFHSVFEGIAIGV). Residues 222-230 (SASKSEAWR) lie on the Extracellular side of the membrane. The chain crosses the membrane as a helical span at residues 231–251 (NLWTIGLHKIFAAVAMGIALL). The Cytoplasmic segment spans residues 252 to 262 (RMIPKRPFLMT). The chain crosses the membrane as a helical span at residues 263-283 (VVYSLAFAVSSPVGVGIGIAI). The Extracellular portion of the chain corresponds to 284 to 296 (DATSQGRAADWTY). A helical membrane pass occupies residues 297–317 (AISMGLATGVFIYVAINHLIA). Over 318-330 (KGYRPHHPTAADK) the chain is Cytoplasmic. The helical transmembrane segment at 331–351 (PLFKFLAVLLGVAVMAVVMIW) threads the bilayer. Position 352 (Asp352) is a topological domain, extracellular.

This sequence belongs to the ZIP transporter (TC 2.A.5) family. As to expression, expressed in vascular bundles of roots and leaves.

The protein localises to the cell membrane. Its function is as follows. Zinc transporter that may mediate zinc uptake from the rhizosphere. May also transport other divalent cations. The polypeptide is Zinc transporter 1 (ZIP1) (Oryza sativa subsp. japonica (Rice)).